Here is a 291-residue protein sequence, read N- to C-terminus: 33 kDa chaperonin (291 aa).

Intrachain disulfides connect Cys237–Cys239 and Cys270–Cys273.

This sequence belongs to the HSP33 family. In terms of processing, under oxidizing conditions two disulfide bonds are formed involving the reactive cysteines. Under reducing conditions zinc is bound to the reactive cysteines and the protein is inactive.

The protein resides in the cytoplasm. In terms of biological role, redox regulated molecular chaperone. Protects both thermally unfolding and oxidatively damaged proteins from irreversible aggregation. Plays an important role in the bacterial defense system toward oxidative stress. The protein is 33 kDa chaperonin of Bacillus cereus (strain B4264).